Reading from the N-terminus, the 607-residue chain is Guanine nucleotide-binding protein-like 1 (607 aa).

Basic residues predominate over residues 1–14 (MPRKKPFSVKQKKK). The disordered stretch occupies residues 1-81 (MPRKKPFSVK…GPRGYDPNRY (81 aa)). The span at 15–26 (QLQDKRERKRGL) shows a compositional bias: basic and acidic residues. Phosphoserine is present on residues serine 32, serine 33, and serine 34. A phosphothreonine mark is found at threonine 48 and threonine 50. Residues serine 51 and serine 68 each carry the phosphoserine modification. The region spanning 178–418 (WRQLWRVLEM…LCDCPGLIFP (241 aa)) is the CP-type G domain. Residue 225 to 228 (NKVD) participates in GTP binding. Serine 324 is subject to Phosphoserine. Residues 367–374 (GFPNVGKS) and 411–415 (DCPGL) each bind GTP. The disordered stretch occupies residues 544–607 (GRVGPAGDEE…PYALLGEDEC (64 aa)). Acidic residues predominate over residues 550–585 (GDEEEEEEEELSSSCEEEGEEDRDADEEGEGDEDTP). Serine 561, serine 562, and serine 563 each carry phosphoserine.

The protein belongs to the TRAFAC class YlqF/YawG GTPase family.

In terms of biological role, possible regulatory or functional link with the histocompatibility cluster. The polypeptide is Guanine nucleotide-binding protein-like 1 (Gnl1) (Mus musculus (Mouse)).